Reading from the N-terminus, the 61-residue chain is Protein translocase subunit SecE (61 aa).

Residues 1-34 (MAELQERIRHFWKESRRAFLVTKKPNWATYKRAA) lie on the Cytoplasmic side of the membrane. The helical transmembrane segment at 35–55 (KITGLGIILIGLIGMLIRIVG) threads the bilayer. Over 56 to 61 (ILILGG) the chain is Extracellular.

Belongs to the SecE/SEC61-gamma family. In terms of assembly, component of the Sec protein translocase complex. Heterotrimer consisting of alpha (SecY), beta (SecG) and gamma (SecE) subunits. The heterotrimers can form oligomers, although 1 heterotrimer is thought to be able to translocate proteins. Interacts with the ribosome. May interact with SecDF, and other proteins may be involved.

It is found in the cell membrane. Essential subunit of the protein translocation channel SecYEG. Clamps together the 2 halves of SecY. May contact the channel plug during translocation. This chain is Protein translocase subunit SecE, found in Pyrococcus furiosus (strain ATCC 43587 / DSM 3638 / JCM 8422 / Vc1).